A 278-amino-acid chain; its full sequence is S-methyl-5'-thioadenosine phosphorylase (278 aa).

Residues Ser13, 55-56, and 88-89 each bind phosphate; these read RH and TA. Met190 contributes to the substrate binding site. Residue Thr191 coordinates phosphate. A substrate-binding site is contributed by 214-216; it reads DYD.

Belongs to the PNP/MTAP phosphorylase family. MTAP subfamily. Homotrimer.

It is found in the cytoplasm. The protein resides in the nucleus. The enzyme catalyses S-methyl-5'-thioadenosine + phosphate = 5-(methylsulfanyl)-alpha-D-ribose 1-phosphate + adenine. The protein operates within amino-acid biosynthesis; L-methionine biosynthesis via salvage pathway; S-methyl-5-thio-alpha-D-ribose 1-phosphate from S-methyl-5'-thioadenosine (phosphorylase route): step 1/1. In terms of biological role, catalyzes the reversible phosphorylation of S-methyl-5'-thioadenosine (MTA) to adenine and 5-methylthioribose-1-phosphate. Involved in the breakdown of MTA, a major by-product of polyamine biosynthesis. Responsible for the first step in the methionine salvage pathway after MTA has been generated from S-adenosylmethionine. Has broad substrate specificity with 6-aminopurine nucleosides as preferred substrates. The sequence is that of S-methyl-5'-thioadenosine phosphorylase from Anopheles gambiae (African malaria mosquito).